The primary structure comprises 316 residues: 4-hydroxy-3-methylbut-2-enyl diphosphate reductase (316 aa).

Residue C12 participates in [4Fe-4S] cluster binding. (2E)-4-hydroxy-3-methylbut-2-enyl diphosphate is bound by residues H41 and H74. Residues H41 and H74 each coordinate dimethylallyl diphosphate. Residues H41 and H74 each contribute to the isopentenyl diphosphate site. C96 is a [4Fe-4S] cluster binding site. A (2E)-4-hydroxy-3-methylbut-2-enyl diphosphate-binding site is contributed by H124. H124 contacts dimethylallyl diphosphate. H124 provides a ligand contact to isopentenyl diphosphate. E126 (proton donor) is an active-site residue. T167 lines the (2E)-4-hydroxy-3-methylbut-2-enyl diphosphate pocket. C197 provides a ligand contact to [4Fe-4S] cluster. S225, S226, N227, and S269 together coordinate (2E)-4-hydroxy-3-methylbut-2-enyl diphosphate. Dimethylallyl diphosphate is bound by residues S225, S226, N227, and S269. Isopentenyl diphosphate-binding residues include S225, S226, N227, and S269.

The protein belongs to the IspH family. Homodimer. [4Fe-4S] cluster is required as a cofactor.

It catalyses the reaction isopentenyl diphosphate + 2 oxidized [2Fe-2S]-[ferredoxin] + H2O = (2E)-4-hydroxy-3-methylbut-2-enyl diphosphate + 2 reduced [2Fe-2S]-[ferredoxin] + 2 H(+). It carries out the reaction dimethylallyl diphosphate + 2 oxidized [2Fe-2S]-[ferredoxin] + H2O = (2E)-4-hydroxy-3-methylbut-2-enyl diphosphate + 2 reduced [2Fe-2S]-[ferredoxin] + 2 H(+). The protein operates within isoprenoid biosynthesis; dimethylallyl diphosphate biosynthesis; dimethylallyl diphosphate from (2E)-4-hydroxy-3-methylbutenyl diphosphate: step 1/1. Its pathway is isoprenoid biosynthesis; isopentenyl diphosphate biosynthesis via DXP pathway; isopentenyl diphosphate from 1-deoxy-D-xylulose 5-phosphate: step 6/6. Its function is as follows. Catalyzes the conversion of 1-hydroxy-2-methyl-2-(E)-butenyl 4-diphosphate (HMBPP) into a mixture of isopentenyl diphosphate (IPP) and dimethylallyl diphosphate (DMAPP). Acts in the terminal step of the DOXP/MEP pathway for isoprenoid precursor biosynthesis. This Pectobacterium carotovorum subsp. carotovorum (strain PC1) protein is 4-hydroxy-3-methylbut-2-enyl diphosphate reductase.